The sequence spans 179 residues: Large ribosomal subunit protein uL5 (179 aa).

Belongs to the universal ribosomal protein uL5 family. As to quaternary structure, part of the 50S ribosomal subunit; part of the 5S rRNA/L5/L18/L25 subcomplex. Contacts the 5S rRNA and the P site tRNA. Forms a bridge to the 30S subunit in the 70S ribosome.

Its function is as follows. This is one of the proteins that bind and probably mediate the attachment of the 5S RNA into the large ribosomal subunit, where it forms part of the central protuberance. In the 70S ribosome it contacts protein S13 of the 30S subunit (bridge B1b), connecting the 2 subunits; this bridge is implicated in subunit movement. Contacts the P site tRNA; the 5S rRNA and some of its associated proteins might help stabilize positioning of ribosome-bound tRNAs. The polypeptide is Large ribosomal subunit protein uL5 (Bacillus mycoides (strain KBAB4) (Bacillus weihenstephanensis)).